The following is a 327-amino-acid chain: Polyprenyl transferase esdpC (327 aa).

8 helical membrane-spanning segments follow: residues 35–54, 73–93, 118–138, 140–160, 171–191, 202–222, 239–259, and 307–327; these read YNPLLATFSGVWATLLAGAS, LLVFVGGYIFCGAGMVWNDWI, EALIWMMAQYIASWYLIAYTL, GHNVLEAMIPVTISTILYPFG, YPQYFLGFTLGYPSVIGWLAI, IMESFALGTTVFTWVLYLNTA, VYFLAGSYIHYFLVFLAALVL, and ENFALGVWTVFACAVELLLKS.

This sequence belongs to the UbiA prenyltransferase family. Mg(2+) is required as a cofactor.

The protein localises to the membrane. Its pathway is secondary metabolite biosynthesis; terpenoid biosynthesis. In terms of biological role, olyprenyl transferase; part of the cluster that mediates the biosynthesis of shearones, diterpenoid pyrones (DPs) which are structurally diverse meroterpenoids consisting of a diterpene linked by a pyrone, and which may exhibit a range of bioactivities. Within the pathway, esdpC takes part to the biosynthesis of the molecular scaffold by catalyzing the C-3 geranylgeranylation reaction of the alpha-pyrone produced by esdpA. The molecular scaffold is commonly biosynthesized by a series of enzymes including the non-reducing polyketide synthase (NR-PKS) esdpA that generates an alpha-pyrone; the prenyltransferase esdpC that attaches a geranylgeranyl pyrophosphate (GGPP) produced by the GGPP synthase (GGPPS) esdpD onto the pyrone unit; the FAD-dependent monooxygenase esdpE that converts an olefin on the diterpene unit into an epoxide; and the terpene cyclase esdpB that catalyzes the cyclization reactions to give the molecular backbone shearone A. In the modification steps, esdpF oxidizes the hydroxy group to a ketone at C-3 and esdpG then attaches hydroxy groups at both C-11 and C-12. After that, esdpI hydroxylates at C-20 and esdpH hydroxylates at C-6'. The ether bridge is generated by nucleophilic attack of the hydroxy group at C-20 to the carbonyl carbon at C-3. EsdpH can also functions prior to esdpI. The different combinations of these modification enzymes lead to the production of diverse shearone derivatives, shearone I being the end product of the pathway. The alpha-ketoglutarate-dependent dioxygenase esdpJ seems not to be involved in this pathway. The protein is Polyprenyl transferase esdpC of Penicillium shearii (Eupenicillium shearii).